Here is a 517-residue protein sequence, read N- to C-terminus: V-type proton ATPase subunit B (517 aa).

S4 carries the phosphoserine modification. A Glycyl lysine isopeptide (Lys-Gly) (interchain with G-Cter in ubiquitin) cross-link involves residue K14. S137 is subject to Phosphoserine. Residue R381 coordinates ATP. A disordered region spans residues 487–517 (RARDDADEDEEDPDTRSSGKKKDASQEESLI). Positions 500 to 511 (DTRSSGKKKDAS) are enriched in basic and acidic residues. Phosphoserine is present on residues S503 and S504. Residue K508 forms a Glycyl lysine isopeptide (Lys-Gly) (interchain with G-Cter in ubiquitin) linkage. S511 carries the phosphoserine; by ATM or ATR modification. At S515 the chain carries Phosphoserine.

The protein belongs to the ATPase alpha/beta chains family. V-ATPase is a heteromultimeric enzyme composed of a peripheral catalytic V1 complex (components A to H) attached to an integral membrane V0 proton pore complex (components: a, c, c', c'', d, e, f and VOA1). Interacts with RAV1 and RAV2 components of the RAVE complex, which are essential for the stability and assembly of V-ATPase.

It is found in the vacuole membrane. Its function is as follows. Non-catalytic subunit of the V1 complex of vacuolar(H+)-ATPase (V-ATPase), a multisubunit enzyme composed of a peripheral complex (V1) that hydrolyzes ATP and a membrane integral complex (V0) that translocates protons. V-ATPase is responsible for acidifying and maintaining the pH of intracellular compartments. This chain is V-type proton ATPase subunit B (VMA2), found in Saccharomyces cerevisiae (strain ATCC 204508 / S288c) (Baker's yeast).